A 660-amino-acid polypeptide reads, in one-letter code: Bifunctional polymyxin resistance protein ArnA (660 aa).

The segment at 1–304 (MKAVIFAYHD…TLGLVAGACL (304 aa)) is formyltransferase ArnAFT. The active-site Proton donor; for formyltransferase activity is histidine 104. (6R)-10-formyltetrahydrofolate is bound by residues arginine 114 and 136-140 (VKRAD). The segment at 314–660 (RRIRVLILGV…RSVDIAERAS (347 aa)) is dehydrogenase ArnADH. NAD(+)-binding positions include aspartate 347 and 368-369 (DI). Residues alanine 393, tyrosine 398, and 432-433 (TS) contribute to the UDP-alpha-D-glucuronate site. The active-site Proton acceptor; for decarboxylase activity is glutamate 434. UDP-alpha-D-glucuronate-binding positions include arginine 460, asparagine 492, 526–535 (KLIDGGQQKR), and tyrosine 613. Arginine 619 acts as the Proton donor; for decarboxylase activity in catalysis.

The protein in the N-terminal section; belongs to the Fmt family. UDP-L-Ara4N formyltransferase subfamily. In the C-terminal section; belongs to the NAD(P)-dependent epimerase/dehydratase family. UDP-glucuronic acid decarboxylase subfamily. As to quaternary structure, homohexamer, formed by a dimer of trimers.

It catalyses the reaction UDP-alpha-D-glucuronate + NAD(+) = UDP-beta-L-threo-pentopyranos-4-ulose + CO2 + NADH. The catalysed reaction is UDP-4-amino-4-deoxy-beta-L-arabinose + (6R)-10-formyltetrahydrofolate = UDP-4-deoxy-4-formamido-beta-L-arabinose + (6S)-5,6,7,8-tetrahydrofolate + H(+). The protein operates within nucleotide-sugar biosynthesis; UDP-4-deoxy-4-formamido-beta-L-arabinose biosynthesis; UDP-4-deoxy-4-formamido-beta-L-arabinose from UDP-alpha-D-glucuronate: step 1/3. It functions in the pathway nucleotide-sugar biosynthesis; UDP-4-deoxy-4-formamido-beta-L-arabinose biosynthesis; UDP-4-deoxy-4-formamido-beta-L-arabinose from UDP-alpha-D-glucuronate: step 3/3. Its pathway is bacterial outer membrane biogenesis; lipopolysaccharide biosynthesis. Its function is as follows. Bifunctional enzyme that catalyzes the oxidative decarboxylation of UDP-glucuronic acid (UDP-GlcUA) to UDP-4-keto-arabinose (UDP-Ara4O) and the addition of a formyl group to UDP-4-amino-4-deoxy-L-arabinose (UDP-L-Ara4N) to form UDP-L-4-formamido-arabinose (UDP-L-Ara4FN). The modified arabinose is attached to lipid A and is required for resistance to polymyxin and cationic antimicrobial peptides. In Salmonella paratyphi A (strain ATCC 9150 / SARB42), this protein is Bifunctional polymyxin resistance protein ArnA.